We begin with the raw amino-acid sequence, 466 residues long: Asparagine--tRNA ligase (466 aa).

It belongs to the class-II aminoacyl-tRNA synthetase family. As to quaternary structure, homodimer.

It localises to the cytoplasm. The enzyme catalyses tRNA(Asn) + L-asparagine + ATP = L-asparaginyl-tRNA(Asn) + AMP + diphosphate + H(+). This chain is Asparagine--tRNA ligase, found in Shewanella sp. (strain MR-4).